We begin with the raw amino-acid sequence, 113 residues long: UPF0416 protein RF_0879 (113 aa).

This sequence belongs to the UPF0416 family.

This is UPF0416 protein RF_0879 from Rickettsia felis (strain ATCC VR-1525 / URRWXCal2) (Rickettsia azadi).